The sequence spans 256 residues: Thiazole synthase (256 aa).

Residue lysine 95 is the Schiff-base intermediate with DXP of the active site. Residues glycine 156, 182 to 183, and 204 to 205 contribute to the 1-deoxy-D-xylulose 5-phosphate site; these read AG and NT.

It belongs to the ThiG family. In terms of assembly, homotetramer. Forms heterodimers with either ThiH or ThiS.

It localises to the cytoplasm. The catalysed reaction is [ThiS sulfur-carrier protein]-C-terminal-Gly-aminoethanethioate + 2-iminoacetate + 1-deoxy-D-xylulose 5-phosphate = [ThiS sulfur-carrier protein]-C-terminal Gly-Gly + 2-[(2R,5Z)-2-carboxy-4-methylthiazol-5(2H)-ylidene]ethyl phosphate + 2 H2O + H(+). It participates in cofactor biosynthesis; thiamine diphosphate biosynthesis. In terms of biological role, catalyzes the rearrangement of 1-deoxy-D-xylulose 5-phosphate (DXP) to produce the thiazole phosphate moiety of thiamine. Sulfur is provided by the thiocarboxylate moiety of the carrier protein ThiS. In vitro, sulfur can be provided by H(2)S. The protein is Thiazole synthase of Photobacterium profundum (strain SS9).